A 265-amino-acid chain; its full sequence is Small ribosomal subunit protein uS5 (265 aa).

Over residues 1–25 (MADTTTAAQADQKPTRAFGAGRPQR) the composition is skewed to low complexity. A disordered region spans residues 1 to 49 (MADTTTAAQADQKPTRAFGAGRPQRGAGGAPQRGGPRPQRGGQGETKSW). Ala2 carries the N-acetylalanine modification. Positions 89-152 (LKDEVMKIVP…VAAKLSVIPV (64 aa)) constitute an S5 DRBM domain.

Belongs to the universal ribosomal protein uS5 family.

Component of the ribosome, a large ribonucleoprotein complex responsible for the synthesis of proteins in the cell. The small ribosomal subunit (SSU) binds messenger RNAs (mRNAs) and translates the encoded message by selecting cognate aminoacyl-transfer RNA (tRNA) molecules. The large subunit (LSU) contains the ribosomal catalytic site termed the peptidyl transferase center (PTC), which catalyzes the formation of peptide bonds, thereby polymerizing the amino acids delivered by tRNAs into a polypeptide chain. The nascent polypeptides leave the ribosome through a tunnel in the LSU and interact with protein factors that function in enzymatic processing, targeting, and the membrane insertion of nascent chains at the exit of the ribosomal tunnel. Plays a role in the assembly and function of the 40S ribosomal subunit. Mutations in this protein affects the control of translational fidelity. Involved in nucleolar processing of pre-18S ribosomal RNA and ribosome assembly. The protein is Small ribosomal subunit protein uS5 (rps2) of Dictyostelium discoideum (Social amoeba).